The sequence spans 734 residues: Cytosolic endo-beta-N-acetylglucosaminidase (734 aa).

Methionine 1 bears the N-acetylmethionine mark. The disordered stretch occupies residues 1–45 (METSSVLTRGAARQRSPAAPEKQARDQTERRPGRRRQGRRINEDQ). The segment covering 22–31 (KQARDQTERR) has biased composition (basic and acidic residues). The BRCT domain maps to 281–375 (QNRVFFDSCD…DFFQNQDKFW (95 aa)).

Belongs to the glycosyl hydrolase 85 family.

It localises to the cytoplasm. The protein resides in the cytosol. It carries out the reaction an N(4)-(oligosaccharide-(1-&gt;3)-[oligosaccharide-(1-&gt;6)]-beta-D-Man-(1-&gt;4)-beta-D-GlcNAc-(1-&gt;4)-alpha-D-GlcNAc)-L-asparaginyl-[protein] + H2O = an oligosaccharide-(1-&gt;3)-[oligosaccharide-(1-&gt;6)]-beta-D-Man-(1-&gt;4)-D-GlcNAc + N(4)-(N-acetyl-beta-D-glucosaminyl)-L-asparaginyl-[protein]. Functionally, endoglycosidase that releases N-glycans from glycoproteins by cleaving the beta-1,4-glycosidic bond in the N,N'-diacetylchitobiose core. Involved in the processing of free oligosaccharides in the cytosol. This Mus musculus (Mouse) protein is Cytosolic endo-beta-N-acetylglucosaminidase (Engase).